Here is a 239-residue protein sequence, read N- to C-terminus: Ribosomal RNA small subunit methyltransferase G (239 aa).

Residues glycine 77, phenylalanine 82, 128–129, and arginine 147 contribute to the S-adenosyl-L-methionine site; that span reads AE.

This sequence belongs to the methyltransferase superfamily. RNA methyltransferase RsmG family.

Its subcellular location is the cytoplasm. Specifically methylates the N7 position of guanine in position 535 of 16S rRNA. The sequence is that of Ribosomal RNA small subunit methyltransferase G from Bacillus anthracis (strain A0248).